Consider the following 226-residue polypeptide: Uracil-DNA glycosylase (226 aa).

The Proton acceptor role is filled by D65.

Belongs to the uracil-DNA glycosylase (UDG) superfamily. UNG family.

The protein resides in the cytoplasm. The catalysed reaction is Hydrolyzes single-stranded DNA or mismatched double-stranded DNA and polynucleotides, releasing free uracil.. Excises uracil residues from the DNA which can arise as a result of misincorporation of dUMP residues by DNA polymerase or due to deamination of cytosine. The chain is Uracil-DNA glycosylase from Bacillus pumilus (strain SAFR-032).